Here is a 341-residue protein sequence, read N- to C-terminus: Serpentine receptor class epsilon-8 (341 aa).

The next 7 membrane-spanning stretches (helical) occupy residues 37-57 (VGFL…FIFI), 64-86 (LTFL…CIIV), 101-123 (WILV…LPIF), 143-163 (IWVS…SAIA), 169-189 (IPVV…YIGI), 235-255 (VQIS…MDHF), and 264-284 (WSYV…PIIL).

Belongs to the nematode receptor-like protein sre family.

The protein resides in the membrane. The polypeptide is Serpentine receptor class epsilon-8 (sre-8) (Caenorhabditis elegans).